Reading from the N-terminus, the 253-residue chain is Triosephosphate isomerase, cytosolic (253 aa).

2 residues coordinate substrate: Asn10 and Lys12. His96 functions as the Electrophile in the catalytic mechanism. Catalysis depends on Glu166, which acts as the Proton acceptor.

Belongs to the triosephosphate isomerase family. In terms of assembly, homodimer. In terms of tissue distribution, starchy endosperm.

Its subcellular location is the cytoplasm. The catalysed reaction is D-glyceraldehyde 3-phosphate = dihydroxyacetone phosphate. It functions in the pathway carbohydrate biosynthesis; gluconeogenesis. The protein operates within carbohydrate degradation; glycolysis; D-glyceraldehyde 3-phosphate from glycerone phosphate: step 1/1. The protein is Triosephosphate isomerase, cytosolic of Hordeum vulgare (Barley).